A 63-amino-acid polypeptide reads, in one-letter code: Glutamine synthetase translation inhibitor (63 aa).

Functionally, inhibits the synthesis of glutamine synthetase II. In Rhizobium leguminosarum, this protein is Glutamine synthetase translation inhibitor (gstI).